The sequence spans 2514 residues: MSGSTQPVAQTWRATEPRYPPHSLSYPVQIARTHTDVGLLEYQHHSRDYASHLSPGSIIQPQRRRPSLLSEFQPGNERSQELHLRPESHSYLPELGKSEMEFIESKRPRLELLPDPLLRPSPLLATGQPAGSEDLTKDRSLTGKLEPVSPPSPPHTDPELELVPPRLSKEELIQNMDRVDREITMVEQQISKLKKKQQQLEEEAAKPPEPEKPVSPPPIESKHRSLVQIIYDENRKKAEAAHRILEGLGPQVELPLYNQPSDTRQYHENIKINQAMRKKLILYFKRRNHARKQWEQKFCQRYDQLMEAWEKKVERIENNPRRRAKESKVREYYEKQFPEIRKQRELQERMQSRVGQRGSGLSMSAARSEHEVSEIIDGLSEQENLEKQMRQLAVIPPMLYDADQQRIKFINMNGLMADPMKVYKDRQVMNMWSEQEKETFREKFMQHPKNFGLIASFLERKTVAECVLYYYLTKKNENYKSLVRRSYRRRGKSQQQQQQQQQQQQQQQQQPMPRSSQEEKDEKEKEKEAEKEEEKPEVENDKEDLLKEKTDDTSGEDNDEKEAVASKGRKTANSQGRRKGRITRSMANEANSEEAITPQQSAELASMELNESSRWTEEEMETAKKGLLEHGRNWSAIARMVGSKTVSQCKNFYFNYKKRQNLDEILQQHKLKMEKERNARRKKKKAPAAASEEAAFPPVVEDEEMEASGVSGNEEEMVEEAEALHASGNEVPRGECSGPATVNNSSDTESIPSPHTEAAKDTGQNGPKPPATLGADGPPPGPPTPPPEDIPAPTEPTPASEATGAPTPPPAPPSPSAPPPVVPKEEKEEETAAAPPVEEGEEQKPPAAEELAVDTGKAEEPVKSECTEEAEEGPAKGKDAEAAEATAEGALKAEKKEGGSGRATTAKSSGAPQDSDSSATCSADEVDEAEGGDKNRLLSPRPSLLTPTGDPRANASPQKPLDLKQLKQRAAAIPPIQVTKVHEPPREDAAPTKPAPPAPPPPQNLQPESDAPQQPGSSPRGKSRSPAPPADKEAFAAEAQKLPGDPPCWTSGLPFPVPPREVIKASPHAPDPSAFSYAPPGHPLPLGLHDTARPVLPRPPTISNPPPLISSAKHPSVLERQIGAISQGMSVQLHVPYSEHAKAPVGPVTMGLPLPMDPKKLAPFSGVKQEQLSPRGQAGPPESLGVPTAQEASVLRGTALGSVPGGSITKGIPSTRVPSDSAITYRGSITHGTPADVLYKGTITRIIGEDSPSRLDRGREDSLPKGHVIYEGKKGHVLSYEGGMSVTQCSKEDGRSSSGPPHETAAPKRTYDMMEGRVGRAISSASIEGLMGRAIPPERHSPHHLKEQHHIRGSITQGIPRSYVEAQEDYLRREAKLLKREGTPPPPPPSRDLTEAYKTQALGPLKLKPAHEGLVATVKEAGRSIHEIPREELRHTPELPLAPRPLKEGSITQGTPLKYDTGASTTGSKKHDVRSLIGSPGRTFPPVHPLDVMADARALERACYEESLKSRPGTASSSGGSIARGAPVIVPELGKPRQSPLTYEDHGAPFAGHLPRGSPVTTREPTPRLQEGSLSSSKASQDRKLTSTPREIAKSPHSTVPEHHPHPISPYEHLLRGVSGVDLYRSHIPLAFDPTSIPRGIPLDAAAAYYLPRHLAPNPTYPHLYPPYLIRGYPDTAALENRQTIINDYITSQQMHHNAATAMAQRADMLRGLSPRESSLALNYAAGPRGIIDLSQVPHLPVLVPPTPGTPATAMDRLAYLPTAPQPFSSRHSSSPLSPGGPTHLTKPTTTSSSERERDRDRERDRDREREKSILTSTTTVEHAPIWRPGTEQSSGSSGGGGGSSSRPASHSHAHQHSPISPRTQDALQQRPSVLHNTGMKGIITAVEPSTPTVLRSTSTSSPVRPAATFPPATHCPLGGTLDGVYPTLMEPVLLPKEAPRVARPERPRADTGHAFLAKPPARSGLEPASSPSKGSEPRPLVPPVSGHATIARTPAKNLAPHHASPDPPAPPASASDPHREKTQSKPFSIQELELRSLGYHGSSYSPEGVEPVSPVSSPSLTHDKGLPKHLEELDKSHLEGELRPKQPGPVKLGGEAAHLPHLRPLPESQPSSSPLLQTAPGVKGHQRVVTLAQHISEVITQDYTRHHPQQLSAPLPAPLYSFPGASCPVLDLRRPPSDLYLPPPDHGAPARGSPHSEGGKRSPEPNKTSVLGGGEDGIEPVSPPEGMTEPGHSRSAVYPLLYRDGEQTEPSRMGSKSPGNTSQPPAFFSKLTESNSAMVKSKKQEINKKLNTHNRNEPEYNISQPGTEIFNMPAITGTGLMTYRSQAVQEHASTNMGLEAIIRKALMGKYDQWEESPPLSANAFNPLNASASLPAAMPITAADGRSDHTLTSPGGGGKAKVSGRPSSRKAKSPAPGLASGDRPPSVSSVHSEGDCNRRTPLTNRVWEDRPSSAGSTPFPYNPLIMRLQAGVMASPPPPGLPAGSGPLAGPHHAWDEEPKPLLCSQYETLSDSE.

Over residues 1–13 (MSGSTQPVAQTWR) the composition is skewed to polar residues. A disordered region spans residues 1–24 (MSGSTQPVAQTWRATEPRYPPHSL). Position 18 is an asymmetric dimethylarginine (R18). A phosphoserine mark is found at S54, S67, S149, and S152. Disordered stretches follow at residues 120-162 (PSPL…ELEL) and 190-220 (ISKL…PPIE). A Phosphothreonine modification is found at T156. Residues 174-215 (QNMDRVDREITMVEQQISKLKKKQQQLEEEAAKPPEPEKPVS) are a coiled coil. Over residues 203–212 (EAAKPPEPEK) the composition is skewed to basic and acidic residues. At S215 the chain carries Phosphoserine. The interval 254–312 (LPLYNQPSDTRQYHENIKINQAMRKKLILYFKRRNHARKQWEQKFCQRYDQLMEAWEKK) is interaction with SIN3A/B. The interval 389–480 (MRQLAVIPPM…YLTKKNENYK (92 aa)) is deacetylase activation domain (DAD). An SANT 1 domain is found at 427–478 (QVMNMWSEQEKETFREKFMQHPKNFGLIASFLERKTVAECVLYYYLTKKNEN). 1D-myo-inositol 1,4,5,6-tetrakisphosphate-binding residues include K449, Y470, and Y471. Disordered stretches follow at residues 487–622 (YRRR…EMET), 674–1081 (EKER…APPG), and 1165–1186 (SGVK…SLGV). Position 493 is a phosphoserine (S493). The span at 494–510 (QQQQQQQQQQQQQQQQQ) shows a compositional bias: low complexity. The span at 516–552 (SQEEKDEKEKEKEAEKEEEKPEVENDKEDLLKEKTDD) shows a compositional bias: basic and acidic residues. A coiled-coil region spans residues 522-561 (EKEKEKEAEKEEEKPEVENDKEDLLKEKTDDTSGEDNDEK). T553 is subject to Phosphothreonine. S554 carries the phosphoserine modification. Composition is skewed to polar residues over residues 597–613 (TPQQ…NESS) and 740–753 (ATVN…SIPS). Residues 610–661 (NESSRWTEEEMETAKKGLLEHGRNWSAIARMVGSKTVSQCKNFYFNYKKRQN) form the SANT 2 domain. A phosphoserine mark is found at S750 and S753. Composition is skewed to pro residues over residues 777 to 796 (GPPP…PTEP) and 806 to 822 (PTPP…PPVV). Basic and acidic residues predominate over residues 856 to 866 (GKAEEPVKSEC). N6-acetyllysine is present on K878. Positions 902–921 (RATTAKSSGAPQDSDSSATC) are enriched in polar residues. Residues 937 to 948 (LLSPRPSLLTPT) show a composition bias toward low complexity. Residue S939 is modified to Phosphoserine. At T946 the chain carries Phosphothreonine. A Phosphoserine modification is found at S956. K959 is modified (N6-acetyllysine). The span at 980–990 (KVHEPPREDAA) shows a compositional bias: basic and acidic residues. Residues 993–1004 (KPAPPAPPPPQN) show a composition bias toward pro residues. Polar residues predominate over residues 1005 to 1014 (LQPESDAPQQ). K1168 is covalently cross-linked (Glycyl lysine isopeptide (Lys-Gly) (interchain with G-Cter in SUMO2)). S1173 carries the post-translational modification Phosphoserine. 2 positions are modified to N6-acetyllysine: K1210 and K1240. S1251 is modified (phosphoserine). A disordered region spans residues 1287-1307 (TQCSKEDGRSSSGPPHETAAP). Phosphoserine is present on S1323. A Phosphothreonine modification is found at T1383. Disordered regions lie at residues 1440–1482 (PLAP…SPGR) and 1506–1609 (ESLK…HPIS). S1479 bears the Phosphoserine mark. The span at 1513–1526 (GTASSSGGSIARGA) shows a compositional bias: low complexity. 3 positions are modified to phosphoserine: S1539, S1595, and S1619. Residue R1653 is modified to Asymmetric dimethylarginine. Disordered regions lie at residues 1763 to 1867 (TAPQ…TQDA) and 1937 to 2124 (KEAP…PGVK). A compositionally biased stretch (low complexity) spans 1766–1782 (QPFSSRHSSSPLSPGGP). S1775 and S1778 each carry phosphoserine. The segment covering 1794 to 1813 (SERERDRDRERDRDREREKS) has biased composition (basic and acidic residues). S1861 is modified (phosphoserine). Positions 1938-1952 (EAPRVARPERPRADT) are enriched in basic and acidic residues. K1959 bears the N6-acetyllysine mark. Position 2005 is a phosphoserine (S2005). K2026 bears the N6-acetyllysine mark. Positions 2043 to 2060 (SSYSPEGVEPVSPVSSPS) are enriched in low complexity. Phosphoserine is present on residues S2046, S2054, S2057, S2058, and S2060. Phosphothreonine is present on T2062. The span at 2062–2085 (THDKGLPKHLEELDKSHLEGELRP) shows a compositional bias: basic and acidic residues. S2077 bears the Phosphoserine mark. Residues 2106 to 2117 (LPESQPSSSPLL) show a composition bias toward low complexity. A required for interaction with RARA in the absence of its ligand region spans residues 2128–2131 (RVVT). The short motif at 2136 to 2140 (ISEVI) is the CORNR box of ID1 element. 2 disordered regions span residues 2174–2235 (RRPP…GHSR) and 2248–2269 (QTEP…PAFF). 3 positions are modified to phosphoserine: S2203, S2223, and S2258. A CORNR box of ID2 motif is present at residues 2339–2343 (LEAII). The segment at 2384–2500 (DGRSDHTLTS…PHHAWDEEPK (117 aa)) is disordered. Residue S2413 is modified to Phosphoserine. Residues 2482-2492 (PAGSGPLAGPH) show a composition bias toward low complexity.

This sequence belongs to the N-CoR nuclear receptor corepressors family. As to quaternary structure, forms a large corepressor complex that contains SIN3A/B and histone deacetylases HDAC1 and HDAC2. This complex associates with the thyroid (TR) and the retinoid acid receptors (RAR) in the absence of ligand, and may stabilize their interaction with TFIIB. Interacts directly with RARA in the absence of ligand; the interaction represses RARA activity. Interacts (isoform SMRT) with HDAC10. Interacts with MINT. Component of the N-Cor repressor complex, at least composed of NCOR1, NCOR2, HDAC3, TBL1X, TBL1R, CORO2A and GPS2. Interacts with CBFA2T3 and ATXN1L. Interacts with RARB; the interaction is weak and does not repress RARB transactivational activity. Interacts (via 1D-myo-inositol 1,4,5,6-tetrakisphosphate) with HDAC3; promoting the histone deacetylase activity of HDAC3. Interacts with HDAC7 and C1D. Interacts with NR4A2; this interaction increases in the absence of PITX3. Interacts with BCL6 (via the BTB domain), required for BCL6 transcriptional repressor activity on a subset of target genes. Forms ternary complexes with BCOR and BCL6 on target gene promoters but, on enhancer elements, interacts with BCL6 and HDAC3 to repress proximal gene expression. May interact with DEAF1. Interacts with RXRA. Interacts with MECP2. Interacts with ZBTB7A. Interacts with AR. Interacts with TBL1Y. Interacts with SANBR (via the BTB domain). Ubiquitous. High levels of expression are detected in lung, spleen and brain.

It is found in the nucleus. Functionally, transcriptional corepressor that mediates the transcriptional repression activity of some nuclear receptors by promoting chromatin condensation, thus preventing access of the basal transcription. Acts by recruiting chromatin modifiers, such as histone deacetylases HDAC1, HDAC2 and HDAC3. Required to activate the histone deacetylase activity of HDAC3. Involved in the regulation BCL6-dependent of the germinal center (GC) reactions, mainly through the control of the GC B-cells proliferation and survival. Recruited by ZBTB7A to the androgen response elements/ARE on target genes, negatively regulates androgen receptor signaling and androgen-induced cell proliferation. In terms of biological role, isoform 1 and isoform 4 have different affinities for different nuclear receptors. The sequence is that of Nuclear receptor corepressor 2 from Homo sapiens (Human).